The following is a 349-amino-acid chain: Selenide, water dikinase (349 aa).

C17 is a catalytic residue. ATP is bound by residues K20 and 48-50; that span reads MAD. Residue D51 coordinates Mg(2+). Residues D68, D91, and 139 to 141 contribute to the ATP site; that span reads GHS. Mg(2+) is bound at residue D91. Residue D227 coordinates Mg(2+).

It belongs to the selenophosphate synthase 1 family. Class I subfamily. As to quaternary structure, homodimer. Mg(2+) serves as cofactor.

It carries out the reaction hydrogenselenide + ATP + H2O = selenophosphate + AMP + phosphate + 2 H(+). Its function is as follows. Synthesizes selenophosphate from selenide and ATP. This is Selenide, water dikinase from Rhizobium meliloti (strain 1021) (Ensifer meliloti).